The chain runs to 155 residues: Cardioactive peptide (155 aa).

An N-terminal signal peptide occupies residues 1 to 23 (MRTSMRISLRLLALLACAICSQA). A propeptide spanning residues 24–49 (SLERENNEGTNMANHKLSGVIQWKYE) is cleaved from the precursor. A disulfide bridge connects residues Cys-54 and Cys-60. Cys-60 is subject to Cysteine amide. A propeptide spanning residues 64 to 155 (RTYPSYPPFS…MQQLEERESK (92 aa)) is cleaved from the precursor. Residues 135-155 (NKQKMLQNEKEMQQLEERESK) are disordered. A compositionally biased stretch (basic and acidic residues) spans 141-155 (QNEKEMQQLEERESK).

As to expression, central nervous system; most neurons exhibit coexpression with Burs.

Its subcellular location is the secreted. In terms of biological role, cardioregulatory neurohormone that increases heart beat rate during adult wing inflation; has no effect on beat amplitude. The effect of CCAP is both ino- and chronotropic. In Drosophila melanogaster (Fruit fly), this protein is Cardioactive peptide.